The sequence spans 385 residues: Multidrug resistance protein MdtE (385 aa).

A signal peptide spans 1-20; that stretch reads MNRRRKLLIPLLFCGAMLTA. The N-palmitoyl cysteine moiety is linked to residue cysteine 21. Cysteine 21 is lipidated: S-diacylglycerol cysteine.

This sequence belongs to the membrane fusion protein (MFP) (TC 8.A.1) family. As to quaternary structure, homotrimer. Part of the tripartite efflux system MdtEF-TolC, which is composed of an inner membrane transporter, MdtF, a membrane fusion protein, MdtE, and an outer membrane component, TolC. The complex forms a large protein conduit and can translocate molecules across both the inner and outer membranes.

It localises to the cell inner membrane. Its function is as follows. Part of the tripartite efflux system MdtEF-TolC, which confers resistance to compounds such as rhodamine 6G, erythromycin, doxorubicin, ethidium bromide, TPP, SDS, deoxycholate, crystal violet and benzalkonium. This is Multidrug resistance protein MdtE (mdtE) from Escherichia coli (strain K12).